We begin with the raw amino-acid sequence, 67 residues long: DNA-directed RNA polymerase subunit omega (67 aa).

The protein belongs to the RNA polymerase subunit omega family. As to quaternary structure, the RNAP catalytic core consists of 2 alpha, 1 beta, 1 beta' and 1 omega subunit. When a sigma factor is associated with the core the holoenzyme is formed, which can initiate transcription.

It carries out the reaction RNA(n) + a ribonucleoside 5'-triphosphate = RNA(n+1) + diphosphate. Its function is as follows. Promotes RNA polymerase assembly. Latches the N- and C-terminal regions of the beta' subunit thereby facilitating its interaction with the beta and alpha subunits. This is DNA-directed RNA polymerase subunit omega from Nitrosomonas eutropha (strain DSM 101675 / C91 / Nm57).